We begin with the raw amino-acid sequence, 448 residues long: Delta(14)-sterol reductase ERG24 (448 aa).

Transmembrane regions (helical) follow at residues 18-38 (ISGALGITIGLPTLTVLFYLL), 75-95 (CWSAYLAWFFILVILDYLLPG), 108-128 (VLNYKINGLSMSSLLIVLLLA), 157-177 (IIICFLFSFMLAVFVYIISFI), 251-271 (VTDSMIVVNLLQAFYIFDGVL), 279-299 (MIDITTDGFGFMLSFGDLAWV), and 318-338 (NLGWTLSLLIVGLQALGFYIF). Residues K345, R349, L368, W373, and 380–381 (NY) each bind NADP(+). The helical transmembrane segment at 394-414 (PTGFQTPLTYFYVIYFASLLI) threads the bilayer. NADP(+)-binding positions include D420, 424–428 (CRAKY), and Y435.

Belongs to the ERG4/ERG24 family.

It localises to the endoplasmic reticulum membrane. It catalyses the reaction 4,4-dimethyl-5alpha-cholesta-8,24-dien-3beta-ol + NADP(+) = 4,4-dimethyl-5alpha-cholesta-8,14,24-trien-3beta-ol + NADPH + H(+). The protein operates within steroid biosynthesis; zymosterol biosynthesis; zymosterol from lanosterol: step 2/6. C-14 sterol reductase; part of the third module of ergosterol biosynthesis pathway that includes the late steps of the pathway. ERG24 reduces the C14=C15 double bond of 4,4-dimethyl-cholesta-8,14,24-trienol to produce 4,4-dimethyl-cholesta-8,24-dienol. The third module or late pathway involves the ergosterol synthesis itself through consecutive reactions that mainly occur in the endoplasmic reticulum (ER) membrane. Firstly, the squalene synthase ERG9 catalyzes the condensation of 2 farnesyl pyrophosphate moieties to form squalene, which is the precursor of all steroids. Squalene synthase is crucial for balancing the incorporation of farnesyl diphosphate (FPP) into sterol and nonsterol isoprene synthesis. Secondly, the squalene epoxidase ERG1 catalyzes the stereospecific oxidation of squalene to (S)-2,3-epoxysqualene, which is considered to be a rate-limiting enzyme in steroid biosynthesis. Then, the lanosterol synthase ERG7 catalyzes the cyclization of (S)-2,3 oxidosqualene to lanosterol, a reaction that forms the sterol core. In the next steps, lanosterol is transformed to zymosterol through a complex process involving various demethylation, reduction and desaturation reactions. The lanosterol 14-alpha-demethylase ERG11 (also known as CYP51) catalyzes C14-demethylation of lanosterol to produce 4,4'-dimethyl cholesta-8,14,24-triene-3-beta-ol, which is critical for ergosterol biosynthesis. The C-14 reductase ERG24 reduces the C14=C15 double bond of 4,4-dimethyl-cholesta-8,14,24-trienol to produce 4,4-dimethyl-cholesta-8,24-dienol. 4,4-dimethyl-cholesta-8,24-dienol is substrate of the C-4 demethylation complex ERG25-ERG26-ERG27 in which ERG25 catalyzes the three-step monooxygenation required for the demethylation of 4,4-dimethyl and 4alpha-methylsterols, ERG26 catalyzes the oxidative decarboxylation that results in a reduction of the 3-beta-hydroxy group at the C-3 carbon to an oxo group, and ERG27 is responsible for the reduction of the keto group on the C-3. ERG28 has a role as a scaffold to help anchor ERG25, ERG26 and ERG27 to the endoplasmic reticulum and ERG29 regulates the activity of the iron-containing C4-methylsterol oxidase ERG25. Then, the sterol 24-C-methyltransferase ERG6 catalyzes the methyl transfer from S-adenosyl-methionine to the C-24 of zymosterol to form fecosterol. The C-8 sterol isomerase ERG2 catalyzes the reaction which results in unsaturation at C-7 in the B ring of sterols and thus converts fecosterol to episterol. The sterol-C5-desaturase ERG3 then catalyzes the introduction of a C-5 double bond in the B ring to produce 5-dehydroepisterol. The C-22 sterol desaturase ERG5 further converts 5-dehydroepisterol into ergosta-5,7,22,24(28)-tetraen-3beta-ol by forming the C-22(23) double bond in the sterol side chain. Finally, ergosta-5,7,22,24(28)-tetraen-3beta-ol is substrate of the C-24(28) sterol reductase ERG4 to produce ergosterol. In Candida albicans (strain SC5314 / ATCC MYA-2876) (Yeast), this protein is Delta(14)-sterol reductase ERG24.